The sequence spans 568 residues: DNA mismatch repair protein MutL (568 aa).

The protein belongs to the DNA mismatch repair MutL/HexB family.

Its function is as follows. This protein is involved in the repair of mismatches in DNA. It is required for dam-dependent methyl-directed DNA mismatch repair. May act as a 'molecular matchmaker', a protein that promotes the formation of a stable complex between two or more DNA-binding proteins in an ATP-dependent manner without itself being part of a final effector complex. The polypeptide is DNA mismatch repair protein MutL (Nostoc punctiforme (strain ATCC 29133 / PCC 73102)).